The sequence spans 62 residues: Photosystem II reaction center protein Z (62 aa).

2 helical membrane-spanning segments follow: residues 8–28 (ALLA…VVFA) and 41–61 (FSGL…NSFV).

The protein belongs to the PsbZ family. PSII is composed of 1 copy each of membrane proteins PsbA, PsbB, PsbC, PsbD, PsbE, PsbF, PsbH, PsbI, PsbJ, PsbK, PsbL, PsbM, PsbT, PsbY, PsbZ, Psb30/Ycf12, at least 3 peripheral proteins of the oxygen-evolving complex and a large number of cofactors. It forms dimeric complexes.

It is found in the plastid. Its subcellular location is the chloroplast thylakoid membrane. Controls the interaction of photosystem II (PSII) cores with the light-harvesting antenna, aiding in the dissipation of excitation energy within PSII. PSII is a light-driven water plastoquinone oxidoreductase, using light energy to abstract electrons from H(2)O, generating a proton gradient subsequently used for ATP formation. The sequence is that of Photosystem II reaction center protein Z from Chlamydomonas reinhardtii (Chlamydomonas smithii).